Reading from the N-terminus, the 152-residue chain is SsrA-binding protein (152 aa).

Belongs to the SmpB family.

Its subcellular location is the cytoplasm. Functionally, required for rescue of stalled ribosomes mediated by trans-translation. Binds to transfer-messenger RNA (tmRNA), required for stable association of tmRNA with ribosomes. tmRNA and SmpB together mimic tRNA shape, replacing the anticodon stem-loop with SmpB. tmRNA is encoded by the ssrA gene; the 2 termini fold to resemble tRNA(Ala) and it encodes a 'tag peptide', a short internal open reading frame. During trans-translation Ala-aminoacylated tmRNA acts like a tRNA, entering the A-site of stalled ribosomes, displacing the stalled mRNA. The ribosome then switches to translate the ORF on the tmRNA; the nascent peptide is terminated with the 'tag peptide' encoded by the tmRNA and targeted for degradation. The ribosome is freed to recommence translation, which seems to be the essential function of trans-translation. The protein is SsrA-binding protein of Rickettsia akari (strain Hartford).